Reading from the N-terminus, the 295-residue chain is MAECCVPVCQRPICIPPPYADLGKAARDIFNKGFGFGLVKLDVKTKSCSGVEFSTSGSSNTDTGKVSGTLETKYKWCEYGLTFTEKWNTDNTLGTEIAIEDQICQGLKLTFDTTFSPNTGKKSGKIKSAYKRECINLGCDVDFDFAGPAIHGSAVFGYEGWLAGYQMTFDSAKSKLTRSNFAVGYRTGDFQLHTNVNNGTEFGGSIYQKVCEDFDTSVNLAWTSGTNCTRFGIAAKYQLDPTASISAKVNNSSLIGVGYTQTLRPGVKLTLSALVDGKSFNAGGHKLGLALELEA.

Positions 24 and 32 each coordinate ATP. Lys32 carries the N6-acetyllysine; alternate modification. Lys32 carries the N6-succinyllysine; alternate modification. A Glycyl lysine isopeptide (Lys-Gly) (interchain with G-Cter in ubiquitin); alternate cross-link involves residue Lys32. The next 2 beta stranded transmembrane spans lie at 38 to 47 (LVKLDVKTKS) and 51 to 59 (VEFSTSGSS). Lys65 is covalently cross-linked (Glycyl lysine isopeptide (Lys-Gly) (interchain with G-Cter in ubiquitin)). The beta stranded transmembrane segment at 66-76 (VSGTLETKYKW) threads the bilayer. Tyr79 carries the post-translational modification Phosphotyrosine. A run of 3 beta stranded transmembrane segments spans residues 81–88 (LTFTEKWN), 92–101 (TLGTEIAIED), and 107–116 (LKLTFDTTFS). Residue Thr119 is modified to Phosphothreonine. Lys121 bears the N6-acetyllysine; alternate mark. Lys121 participates in a covalent cross-link: Glycyl lysine isopeptide (Lys-Gly) (interchain with G-Cter in ubiquitin); alternate. Residue Lys122 forms a Glycyl lysine isopeptide (Lys-Gly) (interchain with G-Cter in ubiquitin) linkage. Beta stranded transmembrane passes span 123–132 (SGKIKSAYKR), 135–142 (INLGCDVD), 149–157 (AIHGSAVFG), and 162–170 (LAGYQMTFD). Lys173 participates in a covalent cross-link: Glycyl lysine isopeptide (Lys-Gly) (interchain with G-Cter in ubiquitin). A run of 6 beta stranded transmembrane segments spans residues 175–187 (KLTR…GYRT), 190–197 (FQLHTNVN), 201–210 (EFGGSIYQKV), 214–223 (FDTSVNLAWT), 230–239 (RFGIAAKYQL), and 243–250 (ASISAKVN). Tyr237 is modified (phosphotyrosine). The residue at position 252 (Ser252) is a Phosphoserine. NAD(+)-binding positions include 254-256 (LIG) and 272-276 (SALVD). Beta stranded transmembrane passes span 254-263 (LIGVGYTQTL) and 266-275 (GVKLTLSALV). An N6-acetyllysine; alternate modification is found at Lys278. Lys278 participates in a covalent cross-link: Glycyl lysine isopeptide (Lys-Gly) (interchain with G-Cter in ubiquitin); alternate. Residues 285-294 (HKLGLALELE) traverse the membrane as a beta stranded segment.

It belongs to the eukaryotic mitochondrial porin family. As to quaternary structure, monomer, homodimer and higher order oligomers; formation of higher order structures is necessary for scramblase activity. Interacts with ARMC12 in a TBC1D21-dependent manner. Interacts with KLC3. Interacts with SPATA33. Interacts with PPP3CC in a SPATA33-dependent manner. In terms of processing, ubiquitinated by PRKN during mitophagy, leading to its degradation and enhancement of mitophagy. Deubiquitinated by USP30. Highly expressed in heart, kidney, brain and ascitic tumor with very low levels in liver. Expressed in the head region of epididymal sperm.

The protein localises to the mitochondrion outer membrane. It is found in the membrane. The enzyme catalyses chloride(in) = chloride(out). It carries out the reaction K(+)(in) = K(+)(out). It catalyses the reaction a 1,2-diacyl-sn-glycero-3-phospho-L-serine(in) = a 1,2-diacyl-sn-glycero-3-phospho-L-serine(out). The catalysed reaction is a 1,2-diacyl-sn-glycero-3-phosphocholine(in) = a 1,2-diacyl-sn-glycero-3-phosphocholine(out). The enzyme catalyses a 1,2-diacyl-sn-glycero-3-phospho-(1D-myo-inositol)(in) = a 1,2-diacyl-sn-glycero-3-phospho-(1D-myo-inositol)(out). Its function is as follows. Non-selective voltage-gated ion channel that mediates the transport of anions and cations through the mitochondrion outer membrane and plasma membrane. The channel adopts an open conformation at zero mV and a closed conformation at both positive and negative potentials. There are two populations of channels; the main that functions in a lower open-state conductance with lower ion selectivity, that switch, in a voltage-dependent manner, from the open to a low-conducting 'closed' state and the other that has a normal ion selectivity in the typical high conductance, 'open' state. Binds various lipids, including the sphingolipid ceramide, the phospholipid phosphatidylcholine, and the sterols cholesterol and oxysterol. Binding of ceramide promotes the mitochondrial outer membrane permeabilization (MOMP) apoptotic pathway. Functionally, catalyzes the scrambling of phospholipids across the outer mitochondrial membrane; the mechanism is unrelated to channel activity and is capable of translocating both anionic and zwitterionic phospholipids. The protein is Non-selective voltage-gated ion channel VDAC2 of Rattus norvegicus (Rat).